The following is a 226-amino-acid chain: UPF0173 metal-dependent hydrolase Dgeo_0136 (226 aa).

Belongs to the UPF0173 family.

This Deinococcus geothermalis (strain DSM 11300 / CIP 105573 / AG-3a) protein is UPF0173 metal-dependent hydrolase Dgeo_0136.